Here is a 303-residue protein sequence, read N- to C-terminus: Pseudouridine-5'-phosphate glycosidase (303 aa).

Glu26 (proton donor) is an active-site residue. Substrate contacts are provided by Lys87 and Val107. Asp139 serves as a coordination point for Mn(2+). 141-143 (SAD) lines the substrate pocket. Lys160 serves as the catalytic Nucleophile.

Belongs to the pseudouridine-5'-phosphate glycosidase family. Homotrimer. Mn(2+) is required as a cofactor.

The catalysed reaction is D-ribose 5-phosphate + uracil = psi-UMP + H2O. Functionally, catalyzes the reversible cleavage of pseudouridine 5'-phosphate (PsiMP) to ribose 5-phosphate and uracil. Functions biologically in the cleavage direction, as part of a pseudouridine degradation pathway. The chain is Pseudouridine-5'-phosphate glycosidase from Saccharopolyspora erythraea (strain ATCC 11635 / DSM 40517 / JCM 4748 / NBRC 13426 / NCIMB 8594 / NRRL 2338).